Reading from the N-terminus, the 727-residue chain is Iron-sulfur clusters transporter atm1, mitochondrial (727 aa).

A disordered region spans residues 46-97 (NSPLRKDASKEPALASNSKTTNPIPTQASASVNPPKDARNATTAKKDLLSET). The segment covering 60–77 (ASNSKTTNPIPTQASASV) has biased composition (polar residues). Residues 81–94 (KDARNATTAKKDLL) show a composition bias toward basic and acidic residues. A helical membrane pass occupies residues 131-152 (VGTALSLLVGAKILNVEVPFYF). The ABC transmembrane type-1 domain maps to 131-421 (VGTALSLLVG…LGSVYRELRQ (291 aa)). Residues 153-175 (KSIVDSMNIDFATVGGTAYTVAG) are Mitochondrial intermembrane-facing. Residues 176-199 (SMIIAYGVTRIGATLFQELRNAVF) form a helical membrane-spanning segment. The Mitochondrial matrix segment spans residues 200–248 (ASVAQKAIRRVARNVFEHLLRLDLNFHLSRQTGGLTRAIDRGTKGISFL). The chain crosses the membrane as a helical span at residues 249 to 272 (LTSMVFHVVPTALEISLVCGILTY). Glutamine 273 is a topological domain (mitochondrial intermembrane). A helical transmembrane segment spans residues 274–294 (YGFQFAAITAATMVAYTAFTI). Residues 295-360 (TTTAWRTKFR…ASIKVTTSLA (66 aa)) lie on the Mitochondrial matrix side of the membrane. Glutathione is bound by residues 300–304 (RTKFR) and 363–366 (NSGQ). A helical transmembrane segment spans residues 361-379 (FLNSGQNMIFSSALAAMMY). At 380–394 (LAANGVANGNLTVGD) the chain is on the mitochondrial intermembrane side. Residues 395-416 (LVMVNQLVFQLSVPLNFLGSVY) traverse the membrane as a helical segment. Residue glycine 413 coordinates glutathione. Residues 417–727 (RELRQSLLDM…DMAPGPKAQQ (311 aa)) lie on the Mitochondrial matrix side of the membrane. Residues 456-692 (IRFENVTFGY…NGIYAELWNA (237 aa)) enclose the ABC transporter domain. Residues tyrosine 465 and 489–500 (GPSGCGKSTILR) each bind ATP. Positions 702-719 (EFERETERDDVESKERDM) are enriched in basic and acidic residues. A disordered region spans residues 702–727 (EFERETERDDVESKERDMAPGPKAQQ).

It belongs to the ABC transporter superfamily. ABCB family. Heavy Metal importer (TC 3.A.1.210) subfamily. Homodimer.

It is found in the mitochondrion inner membrane. In terms of biological role, performs an essential function in the generation of cytoplasmic iron-sulfur proteins by mediating the ATP-dependent export of Fe/S cluster precursors synthesized by nfs1 and other mitochondrial proteins. Hydrolyzes ATP. Binds glutathione and may function by transporting a glutathione-conjugated iron-sulfur compound. In Aspergillus fumigatus (strain ATCC MYA-4609 / CBS 101355 / FGSC A1100 / Af293) (Neosartorya fumigata), this protein is Iron-sulfur clusters transporter atm1, mitochondrial.